The primary structure comprises 226 residues: Ribonuclease S-7 (226 aa).

An N-terminal signal peptide occupies residues 1-27 (MGITGMIYIVTMVFSLIVLILSSSTVG). Glutamine 36 provides a ligand contact to RNA. An intrachain disulfide couples cysteine 42 to cysteine 49. Histidine 60 lines the RNA pocket. Catalysis depends on histidine 60, which acts as the Proton donor. N-linked (GlcNAc...) asparagine; alternate glycans are attached at residues asparagine 74 and asparagine 77. A disulfide bridge links cysteine 75 with cysteine 119. RNA contacts are provided by residues 98–99 (NV), phenylalanine 108, 111–112 (KQ), and 115–116 (KH). Glutamine 112 is an active-site residue. Histidine 116 (proton acceptor) is an active-site residue. Residues asparagine 126, asparagine 144, and asparagine 172 are each glycosylated (N-linked (GlcNAc...) asparagine). Intrachain disulfides connect cysteine 183/cysteine 220 and cysteine 198/cysteine 209.

The protein belongs to the RNase T2 family. In terms of processing, the N-glycans attached at Asn-74 and Asn-77 consist of either monosaccharide (GlcNAc) or disaccharide (GlcNAc-GlcNAc) that could not be distinguished. The N-glycan at Asn-144 contains mannose and xylose, and at Asn-126 contains mannose, xylose and fucose. The N-glycan at Asn-172 consists of disaccharide (GlcNAc-GlcNAc).

It carries out the reaction a ribonucleotidyl-ribonucleotide-RNA + H2O = a 3'-end 3'-phospho-ribonucleotide-RNA + a 5'-end dephospho-ribonucleoside-RNA + H(+). Self-incompatibility (SI) is the inherited ability of a flowering plant to prevent self-fertilization by discriminating between self and non-self pollen during pollination. In many species, self-incompatibility is controlled by the single, multiallelic locus S. The polypeptide is Ribonuclease S-7 (Pyrus pyrifolia (Chinese pear)).